Here is a 207-residue protein sequence, read N- to C-terminus: Guanylate kinase (207 aa).

Positions 3–181 (GLLFVVSAAS…ALHDLESVIT (179 aa)) constitute a Guanylate kinase-like domain. 10–17 (AASGTGKT) provides a ligand contact to ATP.

This sequence belongs to the guanylate kinase family.

It is found in the cytoplasm. The enzyme catalyses GMP + ATP = GDP + ADP. In terms of biological role, essential for recycling GMP and indirectly, cGMP. The chain is Guanylate kinase from Acinetobacter baylyi (strain ATCC 33305 / BD413 / ADP1).